We begin with the raw amino-acid sequence, 37 residues long: Potassium channel toxin alpha-KTx 1.3 (37 aa).

Pyrrolidone carboxylic acid is present on Q1. 3 cysteine pairs are disulfide-bonded: C7–C28, C13–C33, and C17–C35. The interval G26 to C33 is interaction with Ca(2+)-activated K(+) channels.

Belongs to the short scorpion toxin superfamily. Potassium channel inhibitor family. Alpha-KTx 01 subfamily. In terms of tissue distribution, expressed by the venom gland.

Its subcellular location is the secreted. In terms of biological role, blocks selectively the high conductance calcium-activated (maxi-K) potassium channels (KCa1.1/KCNMA1). The chain is Potassium channel toxin alpha-KTx 1.3 from Hottentotta tamulus (Eastern Indian scorpion).